The chain runs to 231 residues: Regulatory protein VanRc (231 aa).

Residues 4–117 (KIVVVDDEKE…EVVARVKTQL (114 aa)) form the Response regulatory domain. Asp-53 is subject to 4-aspartylphosphate. The ompR/PhoB-type DNA-binding region spans 132-231 (VEEYEKDGLI…VWGVGYIIEK (100 aa)).

Post-translationally, phosphorylated by VanSc.

The protein localises to the cytoplasm. Functionally, member of the two-component regulatory system VanSc/VanRc. Binds to the promoter regions of target genes. Activates the transcription of vanC1 and vanXYC in response to vancomycin which results in vancomycin resistance. This is Regulatory protein VanRc from Enterococcus gallinarum.